The following is a 311-amino-acid chain: Olfactory receptor 1N1 (311 aa).

Over 1 to 23 (MENQSSISEFFLRGISAPPEQQQ) the chain is Extracellular. The N-linked (GlcNAc...) asparagine glycan is linked to Asn-3. Residues 24–47 (SLFGIFLCMYLVTLTGNLLIILAI) traverse the membrane as a helical segment. Residues 48-55 (GSDLHLHT) lie on the Cytoplasmic side of the membrane. The helical transmembrane segment at 56–77 (PMYFFLANLSFVDMGLTSSTVT) threads the bilayer. At 78–98 (KMLVNIQTRHHTISYTGCLTQ) the chain is on the extracellular side. The cysteines at positions 95 and 187 are disulfide-linked. Residues 99–118 (MYFFLMFGDLDSFFLAAMAY) traverse the membrane as a helical segment. Residues 119–137 (DRYVAICHPLCYSTVMRPQ) are Cytoplasmic-facing. Residues 138–156 (VCALMLALCWVLTNIVALT) traverse the membrane as a helical segment. At 157–194 (HTFLMARLSFCVTGEIAHFFCDITPVLKLSCSDTHINE) the chain is on the extracellular side. The helical transmembrane segment at 195–217 (MMVFVLGGTVLIVPFLCIVTSYI) threads the bilayer. Over 218–234 (HIVPAILRVRTRGGVGK) the chain is Cytoplasmic. The helical transmembrane segment at 235–257 (AFSTCSSHLCVVCVFYGTLFSAY) threads the bilayer. The Extracellular segment spans residues 258–270 (LCPPSIASEEKDI). The helical transmembrane segment at 271–290 (AAAAMYTIVTPMLNPFIYSL) threads the bilayer. Residues 291-311 (RNKDMKGALKRLFSHRSIVSS) lie on the Cytoplasmic side of the membrane.

The protein belongs to the G-protein coupled receptor 1 family.

It localises to the cell membrane. In terms of biological role, odorant receptor. The protein is Olfactory receptor 1N1 (OR1N1) of Homo sapiens (Human).